Consider the following 422-residue polypeptide: 5'-deoxyadenosine deaminase (422 aa).

Positions 57 and 59 each coordinate Zn(2+). Positions 86 and 178 each coordinate substrate. Residue His205 participates in Zn(2+) binding. Substrate contacts are provided by Glu208 and Asp294. Asp294 serves as a coordination point for Zn(2+).

Belongs to the metallo-dependent hydrolases superfamily. MTA/SAH deaminase family. As to quaternary structure, homotetramer. It depends on Zn(2+) as a cofactor.

The enzyme catalyses 5'-deoxyadenosine + H2O + H(+) = 5'-deoxyinosine + NH4(+). It catalyses the reaction S-adenosyl-L-homocysteine + H2O + H(+) = S-inosyl-L-homocysteine + NH4(+). It carries out the reaction S-methyl-5'-thioadenosine + H2O + H(+) = S-methyl-5'-thioinosine + NH4(+). The catalysed reaction is adenosine + H2O + H(+) = inosine + NH4(+). Its pathway is amino-acid biosynthesis; S-adenosyl-L-methionine biosynthesis. Functionally, catalyzes the deamination of three SAM-derived enzymatic products, namely 5'-deoxyadenosine, S-adenosyl-L-homocysteine, and 5'-methylthioadenosine, to produce the inosine analogs. Can also deaminate adenosine. The preferred substrate for this enzyme is 5'-deoxyadenosine, but all these substrates are efficiently deaminated. Likely functions in a S-adenosyl-L-methionine (SAM) recycling pathway from S-adenosyl-L-homocysteine (SAH) produced from SAM-dependent methylation reactions. May also be involved in the recycling of 5'-deoxyadenosine, whereupon the 5'-deoxyribose moiety of 5'-deoxyinosine is further metabolized to deoxyhexoses used for the biosynthesis of aromatic amino acids in methanogens. The sequence is that of 5'-deoxyadenosine deaminase from Methanococcus maripaludis (strain C5 / ATCC BAA-1333).